The following is an 843-amino-acid chain: Protein P (843 aa).

The tract at residues 1-177 (MPLSYQHFRR…FCGSPYSWEQ (177 aa)) is terminal protein domain (TP). Residues 178–346 (ELQHGSTSLN…YCLSHIINLL (169 aa)) are spacer. The tract at residues 249–301 (TPTRWPSGVEPSGTGHSDNLATRSTSRFHQSEVRKETNPSLSTSKGHTSTGHA) is disordered. 2 stretches are compositionally biased toward polar residues: residues 262–276 (TGHS…TSRF) and 286–299 (NPSL…TSTG). Residues 347-690 (EDWGPCYEHG…YMNLYPVARQ (344 aa)) are polymerase/reverse transcriptase domain (RT). Residues 357 to 600 (EHHIRTPRTP…YSLHFMGYII (244 aa)) enclose the Reverse transcriptase domain. 3 residues coordinate Mg(2+): Asp-429, Asp-551, and Asp-552.

Belongs to the hepadnaviridae P protein family.

The catalysed reaction is DNA(n) + a 2'-deoxyribonucleoside 5'-triphosphate = DNA(n+1) + diphosphate. It carries out the reaction Endonucleolytic cleavage to 5'-phosphomonoester.. With respect to regulation, activated by host HSP70 and HSP40 in vitro to be able to bind the epsilon loop of the pgRNA. Because deletion of the RNase H region renders the protein partly chaperone-independent, the chaperones may be needed indirectly to relieve occlusion of the RNA-binding site by this domain. Inhibited by several reverse-transcriptase inhibitors: Lamivudine, Adefovir and Entecavir. Functionally, multifunctional enzyme that converts the viral RNA genome into dsDNA in viral cytoplasmic capsids. This enzyme displays a DNA polymerase activity that can copy either DNA or RNA templates, and a ribonuclease H (RNase H) activity that cleaves the RNA strand of RNA-DNA heteroduplexes in a partially processive 3'- to 5'-endonucleasic mode. Neo-synthesized pregenomic RNA (pgRNA) are encapsidated together with the P protein, and reverse-transcribed inside the nucleocapsid. Initiation of reverse-transcription occurs first by binding the epsilon loop on the pgRNA genome, and is initiated by protein priming, thereby the 5'-end of (-)DNA is covalently linked to P protein. Partial (+)DNA is synthesized from the (-)DNA template and generates the relaxed circular DNA (RC-DNA) genome. After budding and infection, the RC-DNA migrates in the nucleus, and is converted into a plasmid-like covalently closed circular DNA (cccDNA). The activity of P protein does not seem to be necessary for cccDNA generation, and is presumably released from (+)DNA by host nuclear DNA repair machinery. In Homo sapiens (Human), this protein is Protein P.